A 432-amino-acid chain; its full sequence is Adenylosuccinate synthetase (432 aa).

Residues 12–18 (GDEGKGK) and 40–42 (GHT) contribute to the GTP site. Catalysis depends on Asp13, which acts as the Proton acceptor. 2 residues coordinate Mg(2+): Asp13 and Gly40. Residues 13-16 (DEGK), 38-41 (NAGH), Thr132, Arg146, Gln226, Thr241, and Arg305 each bind IMP. Catalysis depends on His41, which acts as the Proton donor. 301 to 307 (TVTGRKR) serves as a coordination point for substrate. GTP-binding positions include Arg307, 333–335 (KLD), and 415–417 (STS).

This sequence belongs to the adenylosuccinate synthetase family. As to quaternary structure, homodimer. Mg(2+) serves as cofactor.

It is found in the cytoplasm. It catalyses the reaction IMP + L-aspartate + GTP = N(6)-(1,2-dicarboxyethyl)-AMP + GDP + phosphate + 2 H(+). It participates in purine metabolism; AMP biosynthesis via de novo pathway; AMP from IMP: step 1/2. Its function is as follows. Plays an important role in the de novo pathway of purine nucleotide biosynthesis. Catalyzes the first committed step in the biosynthesis of AMP from IMP. The polypeptide is Adenylosuccinate synthetase (Rhizobium etli (strain ATCC 51251 / DSM 11541 / JCM 21823 / NBRC 15573 / CFN 42)).